A 318-amino-acid polypeptide reads, in one-letter code: MASGNCTTPTTFILSGLTDNPGLQMPLFMVFLAIYTITLLTNLGLIRLISVDLHLQTPMYIFLQNLSFTDAAYSTVITPKMLATFLEERKTISYVGCILQYFSFVLLTTSECLLLAVMAYDRYVAICKPLLYPAIMTKAVCWRLVESLYFLAFLNSLVHTCGLLKLSFCYSNVVNHFFCDISPLFQISSSSIAISELLVIISGSLFVMSSIIIILISYVFIILTVVMIRSKDGKYKAFSTCTSHLMAVSLFHGTVIFMYLRPVKLFSLDTDKIASLFYTVVIPMLNPLIYSWRNKEVKDALRRLTATTFGFIDSKAVQ.

Residues Met-1 to Pro-26 lie on the Extracellular side of the membrane. A glycan (N-linked (GlcNAc...) asparagine) is linked at Asn-5. A helical membrane pass occupies residues Leu-27–Ile-49. Topologically, residues Ser-50 to Thr-57 are cytoplasmic. Residues Pro-58–Pro-79 traverse the membrane as a helical segment. The Extracellular segment spans residues Lys-80 to Gln-100. Cys-97 and Cys-179 form a disulfide bridge. A helical transmembrane segment spans residues Tyr-101–Tyr-120. The Cytoplasmic segment spans residues Asp-121–Ala-139. A helical membrane pass occupies residues Val-140–Leu-164. Over Lys-165 to Leu-205 the chain is Extracellular. A helical membrane pass occupies residues Phe-206–Val-226. Over Met-227–Ser-239 the chain is Cytoplasmic. A helical transmembrane segment spans residues Thr-240–Leu-260. Residues Arg-261–Asp-271 are Extracellular-facing. Residues Lys-272–Trp-292 form a helical membrane-spanning segment. At Arg-293–Gln-318 the chain is on the cytoplasmic side.

Belongs to the G-protein coupled receptor 1 family.

The protein resides in the cell membrane. Its function is as follows. Odorant receptor. The chain is Olfactory receptor-like protein COR3 (COR3) from Gallus gallus (Chicken).